We begin with the raw amino-acid sequence, 93 residues long: MKLINIGFGNIVSANRLVAIVSPESAPIKRIIQEARERGMLVDATYGRRTRAVIITDSDHIILSAVQPETVAHRLNTKEAEDVEVDDEEEIDE.

The disordered stretch occupies residues 74 to 93; sequence RLNTKEAEDVEVDDEEEIDE. The span at 81–93 shows a compositional bias: acidic residues; sequence EDVEVDDEEEIDE.

This sequence belongs to the RemA family.

The protein is Putative regulatory protein Cthe_1316 of Acetivibrio thermocellus (strain ATCC 27405 / DSM 1237 / JCM 9322 / NBRC 103400 / NCIMB 10682 / NRRL B-4536 / VPI 7372) (Clostridium thermocellum).